The primary structure comprises 254 residues: MSIAEFAYKEKPETLVLFDVDGTLTPARLTVSEEVRKTLAKLRNKCCIGFVGGSDLSKQLEQLGPNVLDEFDYSFSENGLTAYRLGKELASQSFINWLGEEKYNKLAVFILRYLSEIDLPKRRGTFLEFRNGMINVSPIGRNASTEERNEFERYDKEHQIRAKFVEALKKEFPDYGLTFSIGGQISFDVFPAGWDKTYCLQHVEKDGFKEIHFFGDKTMVGGNDYEIFVDERTIGHSVQSPDDTVKILTELFNL.

Aspartate 19 functions as the Nucleophile in the catalytic mechanism. Residues aspartate 19 and aspartate 21 each coordinate Mg(2+). Aspartate 21 (proton donor/acceptor) is an active-site residue. Alpha-D-mannose 1-phosphate-binding residues include arginine 28, arginine 130, arginine 141, arginine 148, serine 186, and aspartate 188. Mg(2+)-binding residues include aspartate 216, phenylalanine 228, aspartate 230, and threonine 233. Position 240 is a phosphoserine (serine 240).

It belongs to the eukaryotic PMM family. In terms of assembly, homodimer.

It localises to the cytoplasm. It carries out the reaction alpha-D-mannose 1-phosphate = D-mannose 6-phosphate. The protein operates within nucleotide-sugar biosynthesis; GDP-alpha-D-mannose biosynthesis; alpha-D-mannose 1-phosphate from D-fructose 6-phosphate: step 2/2. In terms of biological role, involved in the synthesis of the GDP-mannose and dolichol-phosphate-mannose required for a number of critical mannosyl transfer reactions such as folding and glycosylation of secretory proteins in the ER lumen. The sequence is that of Phosphomannomutase from Saccharomyces cerevisiae (strain ATCC 204508 / S288c) (Baker's yeast).